Consider the following 216-residue polypeptide: LGLQNATSPIMEELIAFHDHALMIIFLISSLVLYIISLMLTTKLTHTSTMNAQEIEMIWTILPAVILIMIALPSLRILYMTDEFNKPYLTLKAIGHQWYWSYEYSDYEDLAFDSYITPTYFLEPGEFRLLEVDNRTTLPMEADIRVLISSQDVLHSWAVPALGVKTDAIPGRLNQAMLTSTRPGLYYGQCSEICGSNHSFMPIVLEFIYFQDFEVW.

The Mitochondrial intermembrane portion of the chain corresponds to 1–8 (LGLQNATS). Residues 9-39 (PIMEELIAFHDHALMIIFLISSLVLYIISLM) traverse the membrane as a helical segment. The Mitochondrial matrix portion of the chain corresponds to 40–53 (LTTKLTHTSTMNAQ). Residues 54 to 81 (EIEMIWTILPAVILIMIALPSLRILYMT) form a helical membrane-spanning segment. Topologically, residues 82–216 (DEFNKPYLTL…FIYFQDFEVW (135 aa)) are mitochondrial intermembrane. Cu cation is bound by residues His155, Cys190, Glu192, Cys194, His198, and Met201. Residue Glu192 participates in Mg(2+) binding.

This sequence belongs to the cytochrome c oxidase subunit 2 family. In terms of assembly, component of the cytochrome c oxidase (complex IV, CIV), a multisubunit enzyme composed of 14 subunits. The complex is composed of a catalytic core of 3 subunits MT-CO1, MT-CO2 and MT-CO3, encoded in the mitochondrial DNA, and 11 supernumerary subunits COX4I, COX5A, COX5B, COX6A, COX6B, COX6C, COX7A, COX7B, COX7C, COX8 and NDUFA4, which are encoded in the nuclear genome. The complex exists as a monomer or a dimer and forms supercomplexes (SCs) in the inner mitochondrial membrane with NADH-ubiquinone oxidoreductase (complex I, CI) and ubiquinol-cytochrome c oxidoreductase (cytochrome b-c1 complex, complex III, CIII), resulting in different assemblies (supercomplex SCI(1)III(2)IV(1) and megacomplex MCI(2)III(2)IV(2)). Found in a complex with TMEM177, COA6, COX18, COX20, SCO1 and SCO2. Interacts with TMEM177 in a COX20-dependent manner. Interacts with COX20. Interacts with COX16. Requires Cu cation as cofactor.

Its subcellular location is the mitochondrion inner membrane. It carries out the reaction 4 Fe(II)-[cytochrome c] + O2 + 8 H(+)(in) = 4 Fe(III)-[cytochrome c] + 2 H2O + 4 H(+)(out). Its function is as follows. Component of the cytochrome c oxidase, the last enzyme in the mitochondrial electron transport chain which drives oxidative phosphorylation. The respiratory chain contains 3 multisubunit complexes succinate dehydrogenase (complex II, CII), ubiquinol-cytochrome c oxidoreductase (cytochrome b-c1 complex, complex III, CIII) and cytochrome c oxidase (complex IV, CIV), that cooperate to transfer electrons derived from NADH and succinate to molecular oxygen, creating an electrochemical gradient over the inner membrane that drives transmembrane transport and the ATP synthase. Cytochrome c oxidase is the component of the respiratory chain that catalyzes the reduction of oxygen to water. Electrons originating from reduced cytochrome c in the intermembrane space (IMS) are transferred via the dinuclear copper A center (CU(A)) of subunit 2 and heme A of subunit 1 to the active site in subunit 1, a binuclear center (BNC) formed by heme A3 and copper B (CU(B)). The BNC reduces molecular oxygen to 2 water molecules using 4 electrons from cytochrome c in the IMS and 4 protons from the mitochondrial matrix. In Callimico goeldii (Goeldi's marmoset), this protein is Cytochrome c oxidase subunit 2 (MT-CO2).